The primary structure comprises 463 residues: RuvB-like 2 (463 aa).

At A2 the chain carries N-acetylalanine. A Glycyl lysine isopeptide (Lys-Gly) (interchain with G-Cter in SUMO2) cross-link involves residue K9. 77–84 (GQPGTGKT) provides a ligand contact to ATP. At S437 the chain carries Phosphoserine. Residues K444 and K456 each participate in a glycyl lysine isopeptide (Lys-Gly) (interchain with G-Cter in SUMO2) cross-link.

Belongs to the RuvB family. In terms of assembly, forms homohexameric rings. Can form a dodecamer with RUVBL1 made of two stacked hexameric rings; however, even though RUVBL1 and RUVBL2 are present in equimolar ratio, the oligomeric status of each hexamer is not known. Oligomerization may regulate binding to nucleic acids and conversely, binding to nucleic acids may affect the dodecameric assembly. Interaction of the complex with DHX34 results in conformational changes of the N-terminus of the RUVBL2 subunits, resulting in loss of nucleotide binding ability and ATP hydrolysis of the complex. Interacts with the transcriptional activation domain of MYC. Interacts with ATF2. Component of the RNA polymerase II holoenzyme complex. May also act to bridge the LEF1/TCF1-CTNNB1 complex and TBP. Component of the NuA4 histone acetyltransferase complex which contains the catalytic subunit KAT5/TIP60 and the subunits EP400, TRRAP/PAF400, BRD8/SMAP, EPC1, DMAP1/DNMAP1, RUVBL1/TIP49, RUVBL2, ING3, actin, ACTL6A/BAF53A, MORF4L1/MRG15, MORF4L2/MRGX, MRGBP, YEATS4/GAS41, VPS72/YL1 and MEAF6. The NuA4 complex interacts with MYC and the adenovirus E1A protein. RUVBL2 interacts with EP400. Component of a NuA4-related complex which contains EP400, TRRAP/PAF400, SRCAP, BRD8/SMAP, EPC1, DMAP1/DNMAP1, RUVBL1/TIP49, RUVBL2, actin, ACTL6A/BAF53A, VPS72 and YEATS4/GAS41. Interacts with NPAT. Component of the chromatin-remodeling INO80 complex; specifically part of a complex module associated with the helicase ATP-binding and the helicase C-terminal domain of INO80. Component of some MLL1/MLL complex, at least composed of the core components KMT2A/MLL1, ASH2L, HCFC1/HCF1, WDR5 and RBBP5, as well as the facultative components BACC1, CHD8, E2F6, HSP70, INO80C, KANSL1, LAS1L, MAX, MCRS1, MGA, MYST1/MOF, PELP1, PHF20, PRP31, RING2, RUVB1/TIP49A, RUVB2/TIP49B, SENP3, TAF1, TAF4, TAF6, TAF7, TAF9 and TEX10. Interacts with IGHMBP2. Interacts with TELO2. Interacts with HINT1. Component of a SWR1-like complex. Component of the R2TP complex composed at least of RUVBL1, RUVBL2, RPAP3 and PIHD1. Component of the PAQosome complex which is responsible for the biogenesis of several protein complexes and which consists of R2TP complex members RUVBL1, RUVBL2, RPAP3 and PIH1D1, URI complex members PFDN2, PFDN6, PDRG1, UXT and URI1 as well as ASDURF, POLR2E and DNAAF10/WDR92. Interacts with ITFG1. Interacts with ZMYND10. Interacts with WAC; WAC positively regulates MTOR activity by promoting the assembly of the TTT complex composed of TELO2, TTI1 and TTI2 and the RUVBL complex composed of RUVBL1 and RUVBL2 into the TTT-RUVBL complex which leads to the dimerization of the mTORC1 complex and its subsequent activation. Forms a complex with APPL1 and APPL2. Interacts with ZNHIT2 (via HIT-type zinc finger) in the presence of ATP or ADP; shows a stronger interaction in the presence of ADP. The RUVBL1/RUVBL2 complex interacts with ZNHIT1 (via HIT-type zinc finger), ZNHIT3 (via HIT-type zinc finger), ZNHIT6 (via HIT-type zinc finger) and DDX59/ZNHIT5 (via HIT-type zinc finger) in the presence of ADP. Interacts with NOPCHAP1; the interaction is direct and disrupted upon ATP binding. Interacts with SMG1.

It is found in the nucleus matrix. It localises to the nucleus. The protein localises to the nucleoplasm. Its subcellular location is the cytoplasm. The protein resides in the membrane. It is found in the dynein axonemal particle. It catalyses the reaction ATP + H2O = ADP + phosphate + H(+). Its function is as follows. Possesses single-stranded DNA-stimulated ATPase and ATP-dependent DNA helicase (5' to 3') activity; hexamerization is thought to be critical for ATP hydrolysis and adjacent subunits in the ring-like structure contribute to the ATPase activity. Component of the NuA4 histone acetyltransferase complex which is involved in transcriptional activation of select genes principally by acetylation of nucleosomal histones H4 and H2A. This modification may both alter nucleosome-DNA interactions and promote interaction of the modified histones with other proteins which positively regulate transcription. This complex may be required for the activation of transcriptional programs associated with oncogene and proto-oncogene mediated growth induction, tumor suppressor mediated growth arrest and replicative senescence, apoptosis, and DNA repair. The NuA4 complex ATPase and helicase activities seem to be, at least in part, contributed by the association of RUVBL1 and RUVBL2 with EP400. NuA4 may also play a direct role in DNA repair when recruited to sites of DNA damage. Component of a SWR1-like complex that specifically mediates the removal of histone H2A.Z/H2AZ1 from the nucleosome. Proposed core component of the chromatin remodeling INO80 complex which exhibits DNA- and nucleosome-activated ATPase activity and catalyzes ATP-dependent nucleosome sliding. Plays an essential role in oncogenic transformation by MYC and also modulates transcriptional activation by the LEF1/TCF1-CTNNB1 complex. May also inhibit the transcriptional activity of ATF2. Involved in the endoplasmic reticulum (ER)-associated degradation (ERAD) pathway where it negatively regulates expression of ER stress response genes. May play a role in regulating the composition of the U5 snRNP complex. In Bos taurus (Bovine), this protein is RuvB-like 2 (RUVBL2).